The following is a 261-amino-acid chain: Histone H3-like centromeric protein cpar-1 (261 aa).

The interval threonine 80–arginine 150 is disordered. Residues alanine 113–arginine 127 are compositionally biased toward polar residues. Positions glycine 132 to serine 146 are enriched in low complexity. The tract at residues tyrosine 164 to leucine 261 is H3-like.

It belongs to the histone H3 family. Forms a nucleosome-like histone octamer containing two molecules each of H2A, H2B, cpar-1 and H4 assembled in one cpar-1-H4 heterotetramer and two H2A-H2B heterodimers. Post-translationally, cleaved at the onset of meiotic anaphase I, likely by separase sep-1.

The protein localises to the nucleus. It localises to the chromosome. Its function is as follows. Histone H3-like variant which exclusively replaces conventional H3 in the nucleosome core of centromeric chromatin at the inner plate of the kinetochore. Required for recruitment and assembly of kinetochore proteins, mitotic progression and chromosome segregation. May serve as an epigenetic mark that propagates centromere identity through replication and cell division. Not required for chromosome segregation during meiosis. The polypeptide is Histone H3-like centromeric protein cpar-1 (Caenorhabditis elegans).